The primary structure comprises 436 residues: GTPase Der (436 aa).

EngA-type G domains are found at residues 4 to 167 (PVVA…PKDA) and 175 to 351 (IKFS…DNHE). GTP-binding positions include 10–17 (GRPNVGKS), 57–61 (DTGGI), 119–122 (NKVD), 181–188 (GRPNVGKS), 229–233 (DTAGI), and 294–297 (NKWD). The 85-residue stretch at 352 to 436 (QRISSAVLND…PIHIIERRRK (85 aa)) folds into the KH-like domain.

It belongs to the TRAFAC class TrmE-Era-EngA-EngB-Septin-like GTPase superfamily. EngA (Der) GTPase family. As to quaternary structure, associates with the 50S ribosomal subunit.

Functionally, GTPase that plays an essential role in the late steps of ribosome biogenesis. This chain is GTPase Der, found in Ligilactobacillus salivarius (strain UCC118) (Lactobacillus salivarius).